The chain runs to 612 residues: Elongation factor 4 (612 aa).

Positions 11–193 (KHIRNFSIVA…EIVKKVPAPN (183 aa)) constitute a tr-type G domain. Residues 23–28 (DHGKST) and 140–143 (NKID) each bind GTP.

Belongs to the TRAFAC class translation factor GTPase superfamily. Classic translation factor GTPase family. LepA subfamily.

Its subcellular location is the cell membrane. The catalysed reaction is GTP + H2O = GDP + phosphate + H(+). Functionally, required for accurate and efficient protein synthesis under certain stress conditions. May act as a fidelity factor of the translation reaction, by catalyzing a one-codon backward translocation of tRNAs on improperly translocated ribosomes. Back-translocation proceeds from a post-translocation (POST) complex to a pre-translocation (PRE) complex, thus giving elongation factor G a second chance to translocate the tRNAs correctly. Binds to ribosomes in a GTP-dependent manner. The chain is Elongation factor 4 from Lactobacillus gasseri (strain ATCC 33323 / DSM 20243 / BCRC 14619 / CIP 102991 / JCM 1131 / KCTC 3163 / NCIMB 11718 / NCTC 13722 / AM63).